A 221-amino-acid polypeptide reads, in one-letter code: 7-cyano-7-deazaguanine synthase (221 aa).

10 to 20 (FSGGQDSTTCL) lines the ATP pocket. The Zn(2+) site is built by C186, C195, C198, and C201.

It belongs to the QueC family. Homodimer. It depends on Zn(2+) as a cofactor.

The enzyme catalyses 7-carboxy-7-deazaguanine + NH4(+) + ATP = 7-cyano-7-deazaguanine + ADP + phosphate + H2O + H(+). The protein operates within purine metabolism; 7-cyano-7-deazaguanine biosynthesis. Its function is as follows. Catalyzes the ATP-dependent conversion of 7-carboxy-7-deazaguanine (CDG) to 7-cyano-7-deazaguanine (preQ(0)). The polypeptide is 7-cyano-7-deazaguanine synthase (Geobacillus kaustophilus (strain HTA426)).